The following is a 507-amino-acid chain: Histidine ammonia-lyase (507 aa).

The 5-imidazolinone (Ala-Gly) cross-link spans 145 to 147 (ASG). S146 is subject to 2,3-didehydroalanine (Ser).

It belongs to the PAL/histidase family. Post-translationally, contains an active site 4-methylidene-imidazol-5-one (MIO), which is formed autocatalytically by cyclization and dehydration of residues Ala-Ser-Gly.

The protein localises to the cytoplasm. It carries out the reaction L-histidine = trans-urocanate + NH4(+). The protein operates within amino-acid degradation; L-histidine degradation into L-glutamate; N-formimidoyl-L-glutamate from L-histidine: step 1/3. The protein is Histidine ammonia-lyase of Treponema denticola (strain ATCC 35405 / DSM 14222 / CIP 103919 / JCM 8153 / KCTC 15104).